Here is a 424-residue protein sequence, read N- to C-terminus: Adenylosuccinate synthetase (424 aa).

GTP is bound by residues 12–18 (GDEGKGK) and 40–42 (GHT). Asp13 acts as the Proton acceptor in catalysis. Asp13 and Gly40 together coordinate Mg(2+). IMP is bound by residues 13–16 (DEGK), 38–41 (NAGH), Thr130, Arg144, Asn220, Thr235, and Arg299. The Proton donor role is filled by His41. 295-301 (VTTGRKR) lines the substrate pocket. GTP-binding positions include Arg301, 327 to 329 (KLD), and 412 to 414 (GTG).

This sequence belongs to the adenylosuccinate synthetase family. As to quaternary structure, homodimer. It depends on Mg(2+) as a cofactor.

Its subcellular location is the cytoplasm. The catalysed reaction is IMP + L-aspartate + GTP = N(6)-(1,2-dicarboxyethyl)-AMP + GDP + phosphate + 2 H(+). It functions in the pathway purine metabolism; AMP biosynthesis via de novo pathway; AMP from IMP: step 1/2. In terms of biological role, plays an important role in the de novo pathway and in the salvage pathway of purine nucleotide biosynthesis. Catalyzes the first committed step in the biosynthesis of AMP from IMP. This chain is Adenylosuccinate synthetase (adB), found in Emericella nidulans (strain FGSC A4 / ATCC 38163 / CBS 112.46 / NRRL 194 / M139) (Aspergillus nidulans).